The sequence spans 859 residues: ATP-dependent RNA helicase DBP4 (859 aa).

A disordered region spans residues 1–34 (MALGDKNQGSSKSQAKQKGTKGKNAQPRLKSNQL). Residues 7-17 (NQGSSKSQAKQ) are compositionally biased toward polar residues. The Q motif motif lies at 60-88 (TLFSELPMSSKTQKGLKSSHFLNPTPIQS). The Helicase ATP-binding domain occupies 91-274 (IPPALQARDI…KLSLYEPLYI (184 aa)). 104 to 111 (AKTGSGKT) lines the ATP pocket. A DEAD box motif is present at residues 213–216 (DEAD). A Helicase C-terminal domain is found at 288–463 (NLEQYYAVVP…NLKQSMQNFA (176 aa)). Disordered regions lie at residues 512-615 (APQI…TKYD) and 771-859 (EKKK…LQGS). The segment covering 528-539 (PSKEELARKAEK) has biased composition (basic and acidic residues). A compositionally biased stretch (acidic residues) spans 540–600 (EEEEEEERAV…GSDEETEEEK (61 aa)). Residues 814 to 823 (SLSPSPAPSL) are compositionally biased toward low complexity.

Belongs to the DEAD box helicase family. DDX10/DBP4 subfamily. Interacts with the U3 and U14 snoRNAs. Associates with pre-ribosomal complexes.

It localises to the nucleus. The protein resides in the nucleolus. The catalysed reaction is ATP + H2O = ADP + phosphate + H(+). Its function is as follows. ATP-dependent RNA helicase required for ribosome biogenesis. Involved in the release of U14 snoRNA in pre-ribosomal complexes. Required for pre-rRNA cleavage at site A2. This Cryptococcus neoformans var. neoformans serotype D (strain B-3501A) (Filobasidiella neoformans) protein is ATP-dependent RNA helicase DBP4 (DBP4).